The chain runs to 301 residues: Probable alpha-L-glutamate ligase 1 (301 aa).

Residues 104 to 287 form the ATP-grasp domain; the sequence is MQLMSRRGIG…VAGAIIAFIE (184 aa). ATP-binding positions include Lys141, 178–179, Asp187, and 211–213; these read EY and RSN. Asp248, Glu260, and Asn262 together coordinate Mg(2+). Asp248, Glu260, and Asn262 together coordinate Mn(2+).

Belongs to the RimK family. Mg(2+) serves as cofactor. Mn(2+) is required as a cofactor.

This Shewanella amazonensis (strain ATCC BAA-1098 / SB2B) protein is Probable alpha-L-glutamate ligase 1.